A 473-amino-acid chain; its full sequence is MKLSMPRFDQAPVLVVGDVMLDRYWHGGTSRISPEAPVPVVKVDQIEDRPGGAANVALNIAALGAPASLVGVTGQDEAADSLANSLQAAGVRSIFQRIAHQPTIVKLRVMSRHQQLLRIDFEEPFATDPLSLGEEVEGLLEGVKVLVLSDYGKGALRNHQALIQAARQKQIPVLADPKGKDFSIYRGASLITPNLSEFEAIVGRCADEAELVAKGLKLLEELDLGALLVTRGEHGMTLLRVGHPALHLPARAREVFDVTGAGDTVISTLAAAIAAGEDLPHAVALANLAAGIVVGKLGTAAISAPELRRAIQREEGSERGVLSLEQLLLAIDDARAHNETIVFTNGCFDILHAGHVTYLEQARAQGDRLIVAINDDASVSRLKGPGRPINSVDRRMAVLAGLGAVDWVISFPEATPENLLRQVKPDVLVKGGDYGIDQVVGADIVKAYGGTVKVLGLVENSSTTAIVEKIRKH.

The segment at 1 to 318 (MKLSMPRFDQ…RAIQREEGSE (318 aa)) is ribokinase. 194-197 (NLSE) serves as a coordination point for ATP. D263 is an active-site residue. The cytidylyltransferase stretch occupies residues 343 to 473 (FTNGCFDILH…TAIVEKIRKH (131 aa)).

It in the N-terminal section; belongs to the carbohydrate kinase PfkB family. The protein in the C-terminal section; belongs to the cytidylyltransferase family. Homodimer.

It catalyses the reaction D-glycero-beta-D-manno-heptose 7-phosphate + ATP = D-glycero-beta-D-manno-heptose 1,7-bisphosphate + ADP + H(+). It carries out the reaction D-glycero-beta-D-manno-heptose 1-phosphate + ATP + H(+) = ADP-D-glycero-beta-D-manno-heptose + diphosphate. The protein operates within nucleotide-sugar biosynthesis; ADP-L-glycero-beta-D-manno-heptose biosynthesis; ADP-L-glycero-beta-D-manno-heptose from D-glycero-beta-D-manno-heptose 7-phosphate: step 1/4. It participates in nucleotide-sugar biosynthesis; ADP-L-glycero-beta-D-manno-heptose biosynthesis; ADP-L-glycero-beta-D-manno-heptose from D-glycero-beta-D-manno-heptose 7-phosphate: step 3/4. Catalyzes the phosphorylation of D-glycero-D-manno-heptose 7-phosphate at the C-1 position to selectively form D-glycero-beta-D-manno-heptose-1,7-bisphosphate. Functionally, catalyzes the ADP transfer from ATP to D-glycero-beta-D-manno-heptose 1-phosphate, yielding ADP-D-glycero-beta-D-manno-heptose. This Pseudomonas entomophila (strain L48) protein is Bifunctional protein HldE.